A 220-amino-acid chain; its full sequence is Kinetochore protein Spc25 (220 aa).

The stretch at 41–119 forms a coiled coil; it reads ILLDVKEAAA…NEIMERIHTL (79 aa).

The protein belongs to the SPC25 family. In terms of assembly, component of the Ndc80 complex, which is composed of Ndc80, Nuf2 and Spc25.

The protein resides in the nucleus. It is found in the chromosome. Its subcellular location is the centromere. It localises to the kinetochore. Its function is as follows. Acts as a component of the essential kinetochore-associated Ndc80 complex, which is required for chromosome segregation and spindle checkpoint activity during meiosis and mitosis. Required for kinetochore integrity and the organization of stable microtubule binding sites in the outer plate of the kinetochore. Participates in SAC signaling that responds specifically to disruptions in spindle microtubule dynamics. The NDC80 complex synergistically enhances the affinity of the SKA1 complex for microtubules and may allow the NDC80 complex to track depolymerizing microtubules. The sequence is that of Kinetochore protein Spc25 from Drosophila erecta (Fruit fly).